The chain runs to 326 residues: Peroxidase 46 (326 aa).

An N-terminal signal peptide occupies residues 1 to 27; the sequence is MASSYRINCSTLLHLLMFLSSLLTSSA. Asparagine 28 is a glycosylation site (N-linked (GlcNAc...) asparagine). 4 disulfide bridges follow: cysteine 38–cysteine 114, cysteine 71–cysteine 76, cysteine 120–cysteine 322, and cysteine 199–cysteine 233. Histidine 69 functions as the Proton acceptor in the catalytic mechanism. Ca(2+) contacts are provided by aspartate 70, valine 73, glycine 75, aspartate 77, and serine 79. Asparagine 85 carries an N-linked (GlcNAc...) asparagine glycan. Heme b is bound at residue histidine 192. Residue threonine 193 coordinates Ca(2+). Positions 246, 249, and 254 each coordinate Ca(2+). N-linked (GlcNAc...) asparagine glycosylation occurs at asparagine 278.

This sequence belongs to the peroxidase family. Classical plant (class III) peroxidase subfamily. Requires heme b as cofactor. It depends on Ca(2+) as a cofactor.

It is found in the secreted. The enzyme catalyses 2 a phenolic donor + H2O2 = 2 a phenolic radical donor + 2 H2O. Functionally, removal of H(2)O(2), oxidation of toxic reductants, biosynthesis and degradation of lignin, suberization, auxin catabolism, response to environmental stresses such as wounding, pathogen attack and oxidative stress. These functions might be dependent on each isozyme/isoform in each plant tissue. This is Peroxidase 46 (PER46) from Arabidopsis thaliana (Mouse-ear cress).